Here is a 158-residue protein sequence, read N- to C-terminus: C-type lectin galactose-binding isoform (158 aa).

An N-terminal signal peptide occupies residues 1–20 (MGRFLLVTLSLLVVAFSLNG). Disulfide bonds link C26–C37, C54–C154, and C129–C146. In terms of domain architecture, C-type lectin spans 33–155 (KNGYCYKVFK…CTALRPFLCQ (123 aa)). Residues Q119, D121, E127, N142, and D143 each contribute to the Ca(2+) site. Residues 119-121 (QPD) carry the Galactose-binding motif.

The protein belongs to the true venom lectin family. Homodimer; disulfide-linked. As to expression, expressed by the venom gland.

Its subcellular location is the secreted. Its function is as follows. Galactose-binding lectin that binds to and agglutinates erythrocytes in a calcium-dependent manner. The polypeptide is C-type lectin galactose-binding isoform (Hoplocephalus stephensii (Stephens's banded snake)).